The primary structure comprises 187 residues: Troponin I, slow skeletal muscle (187 aa).

At Pro-2 the chain carries N-acetylproline. Residues 2-48 (PEVERKSKITASRKLMLKSLMLAKAKECWEQEHEEREAEKVRYLSER) form an involved in binding TNC region. A Phosphoserine modification is found at Ser-58. The involved in binding TNC and actin stretch occupies residues 97-118 (LKLKVLDLRGKFKRPPLRRVRV).

The protein belongs to the troponin I family. Binds to actin and tropomyosin.

In terms of biological role, troponin I is the inhibitory subunit of troponin, the thin filament regulatory complex which confers calcium-sensitivity to striated muscle actomyosin ATPase activity. This is Troponin I, slow skeletal muscle (Tnni1) from Rattus norvegicus (Rat).